Reading from the N-terminus, the 343-residue chain is S-adenosylmethionine:tRNA ribosyltransferase-isomerase (343 aa).

It belongs to the QueA family. Monomer.

Its subcellular location is the cytoplasm. It catalyses the reaction 7-aminomethyl-7-carbaguanosine(34) in tRNA + S-adenosyl-L-methionine = epoxyqueuosine(34) in tRNA + adenine + L-methionine + 2 H(+). It participates in tRNA modification; tRNA-queuosine biosynthesis. In terms of biological role, transfers and isomerizes the ribose moiety from AdoMet to the 7-aminomethyl group of 7-deazaguanine (preQ1-tRNA) to give epoxyqueuosine (oQ-tRNA). The polypeptide is S-adenosylmethionine:tRNA ribosyltransferase-isomerase (Coxiella burnetii (strain Dugway 5J108-111)).